Reading from the N-terminus, the 153-residue chain is Peptide methionine sulfoxide reductase B6 (153 aa).

A MsrB domain is found at N28 to A149. 4 residues coordinate Zn(2+): C67, C70, C113, and C116. C85 and C138 form a disulfide bridge. C138 functions as the Nucleophile in the catalytic mechanism.

Belongs to the MsrB Met sulfoxide reductase family. The cofactor is Zn(2+).

It is found in the cytoplasm. It localises to the cytosol. It catalyses the reaction L-methionyl-[protein] + [thioredoxin]-disulfide + H2O = L-methionyl-(R)-S-oxide-[protein] + [thioredoxin]-dithiol. Its function is as follows. Catalyzes the reduction of methionine sulfoxide (MetSO) to methionine in proteins. Plays a protective role against oxidative stress by restoring activity to proteins that have been inactivated by methionine oxidation. MSRB family specifically reduces the MetSO R-enantiomer. This is Peptide methionine sulfoxide reductase B6 (MSRB6) from Arabidopsis thaliana (Mouse-ear cress).